The sequence spans 239 residues: Ubiquinone biosynthesis O-methyltransferase (239 aa).

The S-adenosyl-L-methionine site is built by Arg44, Gly63, Asp84, and Met128.

This sequence belongs to the methyltransferase superfamily. UbiG/COQ3 family.

It carries out the reaction a 3-demethylubiquinol + S-adenosyl-L-methionine = a ubiquinol + S-adenosyl-L-homocysteine + H(+). The enzyme catalyses a 3-(all-trans-polyprenyl)benzene-1,2-diol + S-adenosyl-L-methionine = a 2-methoxy-6-(all-trans-polyprenyl)phenol + S-adenosyl-L-homocysteine + H(+). Its pathway is cofactor biosynthesis; ubiquinone biosynthesis. Its function is as follows. O-methyltransferase that catalyzes the 2 O-methylation steps in the ubiquinone biosynthetic pathway. The chain is Ubiquinone biosynthesis O-methyltransferase from Xanthomonas campestris pv. campestris (strain 8004).